The sequence spans 135 residues: Large ribosomal subunit protein uL16c (135 aa).

It belongs to the universal ribosomal protein uL16 family. Part of the 50S ribosomal subunit.

The protein resides in the plastid. The protein is Large ribosomal subunit protein uL16c of Epifagus virginiana (Beechdrops).